Consider the following 123-residue polypeptide: Large ribosomal subunit protein bL19 (123 aa).

Belongs to the bacterial ribosomal protein bL19 family.

In terms of biological role, this protein is located at the 30S-50S ribosomal subunit interface and may play a role in the structure and function of the aminoacyl-tRNA binding site. The protein is Large ribosomal subunit protein bL19 of Ruegeria sp. (strain TM1040) (Silicibacter sp.).